Reading from the N-terminus, the 497-residue chain is MSEYRIQGATGEWEVVIGLEVHAQVTSNAKLFSGAATAFGAEPNTQVSLVDAAMPGMLPVPNRECIRQAVRTGMAINAQINKWSRFDRKNYFYADLPQGYQISQLYHPIVGEGSIEVQLDDKNPESLKTIGIERIHVEQDAGKLMHDQHPTMSYVDLNRSGVALMEIVSRPDMRSPAEAGAYLSKLRTILRYVGSCDGNMDQGSMRADVNVSVRRPGEPFGTRTETKNVNSVRFVMAVVEQEAKRQVALIEDGGTVVQETRLYDPDRNETRSMRSKEDAHDYRYFPDPDLLPLELDDAFLEECRASLPELPDAKRHRYETALGLSAYNAGVLTADVETARWFEALLAETAAKAKKPEAEVAKQAANWLISELFGALNKLGASLETSPVTPAAGAELLALIADGTISGSIAKQVLEKMLETGDGAAAIVEREGLKQTSDTGAIEAAIDGILAANADKVGQYKAGKEALFGFFVGQTMKAMQGKANPGVVNELLRKKLG.

The protein belongs to the GatB/GatE family. GatB subfamily. In terms of assembly, heterotrimer of A, B and C subunits.

The enzyme catalyses L-glutamyl-tRNA(Gln) + L-glutamine + ATP + H2O = L-glutaminyl-tRNA(Gln) + L-glutamate + ADP + phosphate + H(+). The catalysed reaction is L-aspartyl-tRNA(Asn) + L-glutamine + ATP + H2O = L-asparaginyl-tRNA(Asn) + L-glutamate + ADP + phosphate + 2 H(+). Its function is as follows. Allows the formation of correctly charged Asn-tRNA(Asn) or Gln-tRNA(Gln) through the transamidation of misacylated Asp-tRNA(Asn) or Glu-tRNA(Gln) in organisms which lack either or both of asparaginyl-tRNA or glutaminyl-tRNA synthetases. The reaction takes place in the presence of glutamine and ATP through an activated phospho-Asp-tRNA(Asn) or phospho-Glu-tRNA(Gln). This is Aspartyl/glutamyl-tRNA(Asn/Gln) amidotransferase subunit B from Novosphingobium aromaticivorans (strain ATCC 700278 / DSM 12444 / CCUG 56034 / CIP 105152 / NBRC 16084 / F199).